Here is a 1534-residue protein sequence, read N- to C-terminus: Alpha-2-macroglobulin homolog (1534 aa).

The signal sequence occupies residues 1 to 38 (MDTQRFQSQFHWHLSFKFSGAIAACLSLSLVGTGLANA).

The protein belongs to the protease inhibitor I39 (alpha-2-macroglobulin) family. Bacterial alpha-2-macroglobulin subfamily.

The sequence is that of Alpha-2-macroglobulin homolog (yfaS) from Escherichia coli O157:H7.